Reading from the N-terminus, the 340-residue chain is Glycerol-3-phosphate dehydrogenase [NAD(P)+] (340 aa).

Residues serine 23, tryptophan 24, arginine 43, lysine 44, and lysine 113 each coordinate NADPH. Sn-glycerol 3-phosphate-binding residues include lysine 113, glycine 141, and threonine 143. Alanine 145 serves as a coordination point for NADPH. Residues lysine 196, aspartate 249, serine 259, arginine 260, and asparagine 261 each contribute to the sn-glycerol 3-phosphate site. The active-site Proton acceptor is lysine 196. Arginine 260 provides a ligand contact to NADPH. NADPH is bound at residue glutamate 286.

The protein belongs to the NAD-dependent glycerol-3-phosphate dehydrogenase family.

The protein localises to the cytoplasm. The enzyme catalyses sn-glycerol 3-phosphate + NAD(+) = dihydroxyacetone phosphate + NADH + H(+). It catalyses the reaction sn-glycerol 3-phosphate + NADP(+) = dihydroxyacetone phosphate + NADPH + H(+). The protein operates within membrane lipid metabolism; glycerophospholipid metabolism. Its function is as follows. Catalyzes the reduction of the glycolytic intermediate dihydroxyacetone phosphate (DHAP) to sn-glycerol 3-phosphate (G3P), the key precursor for phospholipid synthesis. This chain is Glycerol-3-phosphate dehydrogenase [NAD(P)+], found in Zymomonas mobilis subsp. mobilis (strain ATCC 31821 / ZM4 / CP4).